The chain runs to 191 residues: Probable DNA-directed RNA polymerase subunit delta (191 aa).

The HTH HARE-type domain occupies 14-83 (LSMIEVARAI…GENKWGLRSW (70 aa)). The segment at 119–191 (EDAIDYRDDD…EDEEDEEPVL (73 aa)) is disordered.

In terms of assembly, RNAP is composed of a core of 2 alpha, a beta and a beta' subunits. The core is associated with a delta subunit and one of several sigma factors.

In terms of biological role, participates in both the initiation and recycling phases of transcription. In the presence of the delta subunit, RNAP displays an increased specificity of transcription, a decreased affinity for nucleic acids, and an increased efficiency of RNA synthesis because of enhanced recycling. The sequence is that of Probable DNA-directed RNA polymerase subunit delta from Streptococcus pyogenes serotype M6 (strain ATCC BAA-946 / MGAS10394).